The sequence spans 175 residues: Ribonuclease M5 (175 aa).

The 81-residue stretch at N3–S83 folds into the Toprim domain. Mg(2+)-binding residues include E9, D57, and D59.

This sequence belongs to the ribonuclease M5 family. Mg(2+) serves as cofactor.

The protein localises to the cytoplasm. The catalysed reaction is Endonucleolytic cleavage of RNA, removing 21 and 42 nucleotides, respectively, from the 5'- and 3'-termini of a 5S-rRNA precursor.. Required for correct processing of both the 5' and 3' ends of 5S rRNA precursor. Cleaves both sides of a double-stranded region yielding mature 5S rRNA in one step. This chain is Ribonuclease M5, found in Mesoplasma florum (strain ATCC 33453 / NBRC 100688 / NCTC 11704 / L1) (Acholeplasma florum).